The chain runs to 406 residues: Probable tRNA sulfurtransferase (406 aa).

One can recognise a THUMP domain in the interval 62 to 167; the sequence is AEVSNRLTKV…QDATYLSFED (106 aa). ATP-binding positions include 185 to 186, 210 to 211, Arg-267, Gly-289, and Gln-298; these read ML and HF.

The protein belongs to the ThiI family.

The protein resides in the cytoplasm. It carries out the reaction [ThiI sulfur-carrier protein]-S-sulfanyl-L-cysteine + a uridine in tRNA + 2 reduced [2Fe-2S]-[ferredoxin] + ATP + H(+) = [ThiI sulfur-carrier protein]-L-cysteine + a 4-thiouridine in tRNA + 2 oxidized [2Fe-2S]-[ferredoxin] + AMP + diphosphate. The catalysed reaction is [ThiS sulfur-carrier protein]-C-terminal Gly-Gly-AMP + S-sulfanyl-L-cysteinyl-[cysteine desulfurase] + AH2 = [ThiS sulfur-carrier protein]-C-terminal-Gly-aminoethanethioate + L-cysteinyl-[cysteine desulfurase] + A + AMP + 2 H(+). It functions in the pathway cofactor biosynthesis; thiamine diphosphate biosynthesis. Catalyzes the ATP-dependent transfer of a sulfur to tRNA to produce 4-thiouridine in position 8 of tRNAs, which functions as a near-UV photosensor. Also catalyzes the transfer of sulfur to the sulfur carrier protein ThiS, forming ThiS-thiocarboxylate. This is a step in the synthesis of thiazole, in the thiamine biosynthesis pathway. The sulfur is donated as persulfide by IscS. The chain is Probable tRNA sulfurtransferase from Lactococcus lactis subsp. cremoris (strain MG1363).